The chain runs to 500 residues: Glycerol kinase (500 aa).

Residue T12 participates in ADP binding. ATP contacts are provided by T12, T13, and S14. T12 is a binding site for sn-glycerol 3-phosphate. R16 provides a ligand contact to ADP. 4 residues coordinate sn-glycerol 3-phosphate: R82, E83, Y134, and D246. Residues R82, E83, Y134, D246, and Q247 each contribute to the glycerol site. ADP contacts are provided by T268 and G312. ATP contacts are provided by T268, G312, Q316, and G413. G413 and N417 together coordinate ADP.

This sequence belongs to the FGGY kinase family.

The enzyme catalyses glycerol + ATP = sn-glycerol 3-phosphate + ADP + H(+). The protein operates within polyol metabolism; glycerol degradation via glycerol kinase pathway; sn-glycerol 3-phosphate from glycerol: step 1/1. Its activity is regulated as follows. Inhibited by fructose 1,6-bisphosphate (FBP). In terms of biological role, key enzyme in the regulation of glycerol uptake and metabolism. Catalyzes the phosphorylation of glycerol to yield sn-glycerol 3-phosphate. This is Glycerol kinase from Saccharopolyspora erythraea (strain ATCC 11635 / DSM 40517 / JCM 4748 / NBRC 13426 / NCIMB 8594 / NRRL 2338).